The following is a 215-amino-acid chain: MDAAFHEALARGIEALGLPVDAAARALLERYADRLLAWNRKVNLTAITAPAELAEKHLVDSLVLLPFVAGARTLLDVGSGAGLPGIPLACVRRDLSVTCCDGVAKKIAFVKAVSAELDLRVRGVAVRAEGHPEREGLPRADAVVSRALADPDRWVPLGARYLADGGTLLAMLGREVDRAALDAAGAAEGLTLVGLDVYELPVSHAARAVARWQRK.

S-adenosyl-L-methionine-binding positions include Gly78, Leu83, 128 to 129 (AE), and Arg146.

This sequence belongs to the methyltransferase superfamily. RNA methyltransferase RsmG family.

The protein resides in the cytoplasm. The catalysed reaction is guanosine(527) in 16S rRNA + S-adenosyl-L-methionine = N(7)-methylguanosine(527) in 16S rRNA + S-adenosyl-L-homocysteine. Functionally, specifically methylates the N7 position of guanine in position 527 of 16S rRNA. This Anaeromyxobacter dehalogenans (strain 2CP-C) protein is Ribosomal RNA small subunit methyltransferase G.